We begin with the raw amino-acid sequence, 423 residues long: Gamma-glutamyl phosphate reductase (423 aa).

The protein belongs to the gamma-glutamyl phosphate reductase family.

Its subcellular location is the cytoplasm. It catalyses the reaction L-glutamate 5-semialdehyde + phosphate + NADP(+) = L-glutamyl 5-phosphate + NADPH + H(+). The protein operates within amino-acid biosynthesis; L-proline biosynthesis; L-glutamate 5-semialdehyde from L-glutamate: step 2/2. In terms of biological role, catalyzes the NADPH-dependent reduction of L-glutamate 5-phosphate into L-glutamate 5-semialdehyde and phosphate. The product spontaneously undergoes cyclization to form 1-pyrroline-5-carboxylate. The protein is Gamma-glutamyl phosphate reductase of Magnetococcus marinus (strain ATCC BAA-1437 / JCM 17883 / MC-1).